A 634-amino-acid chain; its full sequence is DNA mismatch repair protein MutL (634 aa).

Residues 406 to 427 (HTHHNDTKGSVHTKSFSARSSS) form a disordered region.

This sequence belongs to the DNA mismatch repair MutL/HexB family.

This protein is involved in the repair of mismatches in DNA. It is required for dam-dependent methyl-directed DNA mismatch repair. May act as a 'molecular matchmaker', a protein that promotes the formation of a stable complex between two or more DNA-binding proteins in an ATP-dependent manner without itself being part of a final effector complex. In Anaplasma phagocytophilum (strain HZ), this protein is DNA mismatch repair protein MutL.